The sequence spans 451 residues: MSQRSTKMGDTIAAIATASGAAGIGIIRLSGSLIKTIATGLGMTTLRPRYAHYTRFLDVQDEVIDDGLALWFPAPHSFTGEDVLELQGHGSPLLLRQLLTRCLDLGARQAHPGEFSERAFLNGKLDLIQAEAIADMIGAADLRAARAARRSLDGVFSRRCEALAQQLIRLRIHVEATIDFAEESLDTLDRAQIRTSLQTLNVELTQLLRDAEHGKRLCDGLYTVLVGPPNVGKSSLLNALIGSDRAIVTDVPGTTRDTLRESVHFHGLEFVLVDTAGLREEGDAIEREGMRRTLNELQRADLALVVLDACDPQIGSLALADALTSVPRVLWIHNKLDLLTEPPSALDTDVIPVSAMTGAGLETLKTRLRTLLLGETVETIEGEFSARLRHVQALQRTAAHVTDANAQFAYEHLELTAEELRLAYKALGEINGSMSPDELLGRIFSNFCIGK.

(6S)-5-formyl-5,6,7,8-tetrahydrofolate-binding residues include R28, E85, and K124. A TrmE-type G domain is found at 220–373 (GLYTVLVGPP…LKTRLRTLLL (154 aa)). Position 230 (N230) interacts with K(+). Residues 230–235 (NVGKSS), 249–255 (TDVPGTT), and 274–277 (DTAG) each bind GTP. S234 is a Mg(2+) binding site. 3 residues coordinate K(+): T249, V251, and T254. T255 provides a ligand contact to Mg(2+). A (6S)-5-formyl-5,6,7,8-tetrahydrofolate-binding site is contributed by K451.

This sequence belongs to the TRAFAC class TrmE-Era-EngA-EngB-Septin-like GTPase superfamily. TrmE GTPase family. As to quaternary structure, homodimer. Heterotetramer of two MnmE and two MnmG subunits. K(+) serves as cofactor.

It localises to the cytoplasm. Functionally, exhibits a very high intrinsic GTPase hydrolysis rate. Involved in the addition of a carboxymethylaminomethyl (cmnm) group at the wobble position (U34) of certain tRNAs, forming tRNA-cmnm(5)s(2)U34. This is tRNA modification GTPase MnmE from Xylella fastidiosa (strain 9a5c).